The primary structure comprises 697 residues: Pentatricopeptide repeat-containing protein At5g46460, mitochondrial (697 aa).

The transit peptide at 1-36 (MWSRAIFQRFRFRAFSISHVIHGKCYRSFSVTVEFQ) directs the protein to the mitochondrion. 14 PPR repeats span residues 39–64 (EVLI…VPSP), 65–95 (HVSL…MPVR), 96–130 (DVVS…SVVS), 131–157 (WTAM…MPVK), 158–192 (DTAA…NVIS), 193–223 (WTTM…CIKS), 224–258 (TSRP…GFLY), 259–289 (EEYV…KVHE), 290–324 (QVAV…SILP), 325–359 (NQST…GLET), 360–390 (DAFV…IFKK), 391–425 (SIVS…NKEP), 426–456 (DEIT…MSSG), and 463–497 (KIQH…PNEM). Positions 498-573 (VWLALLSACR…KPGSSWVVIR (76 aa)) are type E motif. Positions 574–602 (GKKHEFFSGDQPHCSRIYEKLEFLREKLK) are type E(+) motif. Residues 603–697 (ELGYAPDYRS…NGTCSCGDYW (95 aa)) are type DYW motif.

This sequence belongs to the PPR family. PCMP-H subfamily.

The protein localises to the mitochondrion. This chain is Pentatricopeptide repeat-containing protein At5g46460, mitochondrial (PCMP-H49), found in Arabidopsis thaliana (Mouse-ear cress).